We begin with the raw amino-acid sequence, 570 residues long: Sulfite reductase [NADPH] hemoprotein beta-component (570 aa).

Residues C434, C440, C479, and C483 each coordinate [4Fe-4S] cluster. C483 serves as a coordination point for siroheme.

The protein belongs to the nitrite and sulfite reductase 4Fe-4S domain family. Alpha(8)-beta(8). The alpha component is a flavoprotein, the beta component is a hemoprotein. Requires siroheme as cofactor. [4Fe-4S] cluster serves as cofactor.

The enzyme catalyses hydrogen sulfide + 3 NADP(+) + 3 H2O = sulfite + 3 NADPH + 4 H(+). Its pathway is sulfur metabolism; hydrogen sulfide biosynthesis; hydrogen sulfide from sulfite (NADPH route): step 1/1. Functionally, component of the sulfite reductase complex that catalyzes the 6-electron reduction of sulfite to sulfide. This is one of several activities required for the biosynthesis of L-cysteine from sulfate. This chain is Sulfite reductase [NADPH] hemoprotein beta-component, found in Escherichia coli O127:H6 (strain E2348/69 / EPEC).